The chain runs to 209 residues: Uracil phosphoribosyltransferase (209 aa).

5-phospho-alpha-D-ribose 1-diphosphate is bound by residues Arg79, Arg104, and 131–139 (DPMLATGAS). Uracil is bound by residues Ile194 and 199-201 (GDA). Residue Asp200 participates in 5-phospho-alpha-D-ribose 1-diphosphate binding.

The protein belongs to the UPRTase family. Mg(2+) is required as a cofactor.

The enzyme catalyses UMP + diphosphate = 5-phospho-alpha-D-ribose 1-diphosphate + uracil. Its pathway is pyrimidine metabolism; UMP biosynthesis via salvage pathway; UMP from uracil: step 1/1. Its activity is regulated as follows. Allosterically activated by GTP. Functionally, catalyzes the conversion of uracil and 5-phospho-alpha-D-ribose 1-diphosphate (PRPP) to UMP and diphosphate. The chain is Uracil phosphoribosyltransferase from Staphylococcus haemolyticus (strain JCSC1435).